The chain runs to 226 residues: Elongation factor G (226 aa).

This sequence belongs to the GTP-binding elongation factor family. EF-G/EF-2 subfamily.

It localises to the cytoplasm. In terms of biological role, catalyzes the GTP-dependent ribosomal translocation step during translation elongation. During this step, the ribosome changes from the pre-translocational (PRE) to the post-translocational (POST) state as the newly formed A-site-bound peptidyl-tRNA and P-site-bound deacylated tRNA move to the P and E sites, respectively. Catalyzes the coordinated movement of the two tRNA molecules, the mRNA and conformational changes in the ribosome. This Neisseria gonorrhoeae protein is Elongation factor G (fusA).